The primary structure comprises 7094 residues: Replicase polyprotein 1ab (7094 aa).

The 143-residue stretch at 54–196 (PENHVMVDCR…PWVMYLRKCG (143 aa)) folds into the CoV Nsp1 globular domain. The region spanning 216–246 (FKVEDAYDLVHDEPKGKFSKKAYALIRGYRG) is the BetaCoV Nsp1 C-terminal domain. Residues 250-519 (LLYVDQYGCD…LICKALYLDY (270 aa)) enclose the CoV Nsp2 N-terminal domain. C392, C397, C413, and C416 together coordinate Zn(2+). Positions 392–416 (CEQDLCDFKGWVPGNMIDGFACTTC) are C4. The 190-residue stretch at 524–713 (CGNLHQRELL…AQAFRSVAKV (190 aa)) folds into the CoV Nsp2 middle domain. In terms of domain architecture, CoV Nsp2 C-terminal spans 733-851 (RRRICLSGSK…LDQAWRVPCA (119 aa)). Residues 853-966 (RRVTFKEQPT…LYCAFTAPED (114 aa)) enclose the Ubiquitin-like 1 domain. One can recognise a Peptidase C16 1 domain in the interval 1036–1274 (DLESVIQDYE…IAQLYGSCIT (239 aa)). The active-site For PL1-PRO activity is the C1074. The Zn(2+) site is built by C1151, C1154, C1177, and C1179. The segment at 1151 to 1179 (CIKCDLALKLKGLDAMFFYGDVVSHVCKC) adopts a C4-type 1 zinc-finger fold. Active-site for PL1-PRO activity residues include H1225 and D1236. The Macro domain maps to 1275-1435 (PNVCFVKGDI…LISKCQITAV (161 aa)). Residues 1491–1563 (DDARTFVQSN…VAQIKALFLD (73 aa)) enclose the DPUP domain. The region spanning 1562 to 1617 (LDKVDILLTVDGVNFTNRFVPVGESFGKSLGNVFCDGVNVTKHKCDINYKGKVFFQ) is the Ubiquitin-like 2 domain. Positions 1631 to 1892 (SSFNFDQKEL…KIEYNPDLSQ (262 aa)) constitute a Peptidase C16 2 domain. C1671 (for PL2-PRO activity) is an active-site residue. The Zn(2+) site is built by C1749, C1751, C1783, and C1785. A C4-type 2 zinc finger spans residues 1749–1785 (CKCGVKQEQRTGVDAVMHFGTLSREDLEIGYTVDCSC). Active-site for PL2-PRO activity residues include H1828 and D1842. A Nucleic acid-binding domain is found at 1906–2007 (IKAQFKTFEK…TYFNRPLLVD (102 aa)). One can recognise a G2M domain in the interval 2020-2169 (DDGGDISESD…ADNKVIYTTE (150 aa)). 3 consecutive transmembrane segments (helical) span residues 2138 to 2158 (ISACFNFIKWLFVLLFGWIKI), 2199 to 2219 (ACIIATIFLLWFNFIYANVIF), and 2227 to 2247 (IGFLPTFVGKIAQWIKSTFSL). Residues 2138-2385 (ISACFNFIKW…ASFIKLFILF (248 aa)) form an HD1 region. One can recognise a 3Ecto domain in the interval 2235–2296 (GKIAQWIKST…AIDVVQYEAD (62 aa)). Disulfide bonds link C2251–C2275 and C2266–C2272. Helical transmembrane passes span 2313–2333 (LIVSYALYTAWFYPLFALISI), 2343–2363 (LFMLSTLHWSVRLLVSLANML), and 2365–2385 (AHVFMRFYIIIASFIKLFILF). The interval 2383-2473 (ILFRHVAYGC…ELKRPIQPTD (91 aa)) is Y1. The CoV Nsp3 Y domain maps to 2383 to 2750 (ILFRHVAYGC…LTTPFSLKGG (368 aa)). Positions 2387, 2392, 2397, 2400, 2433, 2436, 2440, and 2443 each coordinate Zn(2+). The segment at 2387–2400 (HVAYGCSKPGCLFC) is ZF1. The segment at 2433–2443 (CSKHQWNCIDC) is ZF2. The Y2 stretch occupies residues 2474–2566 (VAYHTVTDVK…MVDKNLITTA (93 aa)). The interval 2474-2750 (VAYHTVTDVK…LTTPFSLKGG (277 aa)) is coV-Y. A Y3 region spans residues 2567 to 2649 (NTGTSVTETM…DSVMSAVSAG (83 aa)). The segment at 2650-2750 (LELTDESCNN…LTTPFSLKGG (101 aa)) is Y4. A run of 7 helical transmembrane segments spans residues 2752-2772 (VFSYFVYVCFLLSLVCFIGLW), 2824-2844 (STFGLSYYSNSMACPIVVAVV), 3009-3029 (VFDLIYQLFKGLAQPVDFLAL), 3031-3051 (ASSIAGAILAVIVVLVFYYLI), 3063-3083 (IVFVNVIVWCVNFMMLFVFQV), 3090-3110 (VYAICYFYATLYFPSEISVIM), and 3115-3135 (LVMYGTIMPLWFCLLYISVVV). Positions 2752 to 3135 (VFSYFVYVCF…FCLLYISVVV (384 aa)) are HD2. The Nsp4C domain maps to 3149–3246 (LGTSVRSDGT…TASVSTSFLQ (98 aa)). Positions 3247-3549 (SGIVKMVNPT…YQQLAGIKLQ (303 aa)) constitute a Peptidase C30 domain. Residues H3287 and C3391 each act as for 3CL-PRO activity in the active site. Transmembrane regions (helical) follow at residues 3558 to 3578 (GIVCWIMASTFLFSCIITAFV), 3588 to 3608 (TNMLSITFCALCVISLAMLLV), 3614 to 3634 (YLTMYIIPVLFTLLYNNYLVV), 3657 to 3677 (TYTDEVIYGMLLLIGMVFVTL), 3684 to 3704 (LFSFIMFVGRVISVVSLWYMG), 3711 to 3731 (ILLMLASLFGTYTWTTALSMA), and 3755 to 3775 (IVLVCYLFIGYIISCYWGLFS). The segment at 3558–3775 (GIVCWIMAST…IISCYWGLFS (218 aa)) is HD3. The RdRp Nsp7 cofactor domain occupies 3837-3925 (SKLTDVKCAN…DYAKDNTVLQ (89 aa)). The RdRp Nsp8 cofactor domain occupies 3926–4122 (ALQSEFVNMA…HNEVSATVLQ (197 aa)). The region spanning 4123-4232 (NNELMPAKLK…GTISSTVRLQ (110 aa)) is the Nsp9 ssRNA-binding domain. Residues 4233-4370 (AGTATEYASN…CVSTDTTVQS (138 aa)) form the ExoN/MTase coactivator domain. Residues C4306, C4309, H4315, C4322, C4348, C4351, C4359, and C4361 each contribute to the Zn(2+) site. 2 zinc fingers span residues 4306 to 4322 (CIYCRARVEHPDVDGLC) and 4348 to 4361 (CQVCGFWRDGSCSC). The NiRAN domain occupies 4375-4630 (FLNRVRGTSV…DCELYVNNAY (256 aa)). The Mn(2+) site is built by N4578 and D4587. The Nsp12 Interface domain occupies 4631–4729 (RLFDLVQYDF…MNMDVDTHRY (99 aa)). Residues H4660, C4666, C4671, C4675, and C4852 each coordinate Zn(2+). The Nsp12 RNA-dependent RNA polymerase domain maps to 4730-5297 (RLSLKDLLLY…NMYLRSAVMQ (568 aa)). Residues 4732–4946 (SLKDLLLYAA…HQKCLKSIAA (215 aa)) are rdRp Fingers N-ter. The interval 4947 to 4985 (TRGVPVVIGTTKFYGGWDDMLRRLIKDVDNPVLMGWDYP) is rdRp Palm N-ter. The 163-residue stretch at 4977 to 5139 (PVLMGWDYPK…CYNSDYASKG (163 aa)) folds into the RdRp catalytic domain. A rdRp Fingers C-ter region spans residues 4986 to 5044 (KCDRAMPNILRIVSSLVLARKHEACCSQSDRFYRLANECAQVLSEIVMCGGCYYVKPGG). The Zn(2+) site is built by H5007, C5010, and C5011. A rdRp Palm C-ter region spans residues 5045–5180 (TSSGDATTAF…NNGPHEFCSQ (136 aa)). Active-site residues include S5124, D5125, and D5126. The tract at residues 5181–5297 (HTMLVKMDGD…NMYLRSAVMQ (117 aa)) is rdRp Thumb. The CV ZBD domain occupies 5298–5410 (SVGACVVCSS…DDFNRIASCK (113 aa)). Zn(2+) contacts are provided by C5302, C5305, C5313, C5316, C5323, C5326, H5330, H5336, C5347, C5352, C5369, and H5372. A (+)RNA virus helicase ATP-binding domain is found at 5553 to 5734 (SVLETFQNNV…MCCLGPDIFL (182 aa)). 5578 to 5585 (GPPGTGKS) serves as a coordination point for ATP. Residues 5735 to 5904 (GTCYRCPKEI…VETRVQCSTN (170 aa)) form the (+)RNA virus helicase C-terminal domain. One can recognise an ExoN domain in the interval 5971-6186 (LFITKEEAVK…RCLAVYDCFC (216 aa)). Residues D5989, E5991, and E6090 contribute to the active site. Residues C6106, C6109, C6125, H6128, H6156, C6160, and H6163 each coordinate Zn(2+). Catalysis depends on residues H6167 and D6172. C6178 lines the Zn(2+) pocket. Residues 6195–6421 (YPIISNELSI…NLWNTFTKLQ (227 aa)) form the N7-MTase domain. Residue 6230 to 6236 (DIGNPKA) coordinates S-adenosyl-L-methionine. The segment at 6308 to 6322 (CNGGSLYVNKHAFHT) is gpppA-binding. The Zn(2+) site is built by C6346, C6367, C6378, and H6381. Positions 6422-6482 (SLENVVYNLV…NVAVELFAKR (61 aa)) constitute a Nsp15 N-terminal oligomerization domain. The region spanning 6483-6603 (SIRHHPELKL…FAVRKEGQDV (121 aa)) is the AV-Nsp11N/CoV-Nsp15M domain. The NendoU domain occupies 6653–6792 (TCRTDMEKDF…NDEKVMTFYP (140 aa)). Active-site residues include H6683, H6698, K6738, K6841, D6925, K6965, and E6998. The Nidovirus-type SAM-dependent 2'-O-MTase domain maps to 6797 to 7091 (ASDWKPGYSM…KEVFVGDSLV (295 aa)).

The protein belongs to the coronaviruses polyprotein 1ab family. In terms of assembly, interacts with host PHB and PHB2. Interacts with papain-like protease nsp3 and non-structural protein 6. As to quaternary structure, monomer. Homodimer. Only the homodimer shows catalytic activity. In terms of assembly, interacts with nsp8 and nsp12 to form the replication-transcription complex (RTC): nsp12, nsp7, two subunits of nsp8, and up to two subunits of nsp13. Interacts with nsp7, nsp13 and nsp12 to form the replication-transcription complex (RTC): nsp12, nsp7, two subunits of nsp8, and up to two subunits of nsp13. As to quaternary structure, interacts with nsp12. In terms of assembly, interacts with proofreading exoribonuclease nsp14 and 2'-O-methyltransferase nsp16; these interactions enhance nsp14 and nsp16 enzymatic activities. Interacts with nsp7 and nsp8 to form the replication-transcription complex (RTC): nsp12, nsp7, two subunits of nsp8, and up to two subunits of nsp13. Interacts with nsp9. As to quaternary structure, interacts with nsp8 to form the replication-transcription complex (RTC): nsp12, nsp7, two subunits of nsp8, and up to two subunits of nsp13. Requires Mn(2+) as cofactor. The cofactor is Mg(2+). In terms of processing, specific enzymatic cleavages in vivo by its own proteases yield mature proteins. 3CL-PRO and PL-PRO proteinases are autocatalytically processed.

The protein resides in the host membrane. It is found in the host cytoplasm. It localises to the host perinuclear region. The protein localises to the host endoplasmic reticulum-Golgi intermediate compartment. It carries out the reaction RNA(n) + a ribonucleoside 5'-triphosphate = RNA(n+1) + diphosphate. The catalysed reaction is ATP + H2O = ADP + phosphate + H(+). The enzyme catalyses Thiol-dependent hydrolysis of ester, thioester, amide, peptide and isopeptide bonds formed by the C-terminal Gly of ubiquitin (a 76-residue protein attached to proteins as an intracellular targeting signal).. It catalyses the reaction a 5'-end (N(7)-methyl 5'-triphosphoguanosine)-ribonucleoside in mRNA + S-adenosyl-L-methionine = a 5'-end (N(7)-methyl 5'-triphosphoguanosine)-(2'-O-methyl-ribonucleoside) in mRNA + S-adenosyl-L-homocysteine + H(+). It carries out the reaction uridylyl-uridylyl-ribonucleotide-RNA = a 3'-end uridylyl-2',3'-cyclophospho-uridine-RNA + a 5'-end dephospho-ribonucleoside-RNA. The catalysed reaction is a 5'-end diphospho-ribonucleoside in mRNA + GTP + H(+) = a 5'-end (5'-triphosphoguanosine)-ribonucleoside in mRNA + diphosphate. The enzyme catalyses a 5'-end (5'-triphosphoguanosine)-ribonucleoside in mRNA + S-adenosyl-L-methionine = a 5'-end (N(7)-methyl 5'-triphosphoguanosine)-ribonucleoside in mRNA + S-adenosyl-L-homocysteine. Functionally, the replicase polyprotein of coronaviruses is a multifunctional protein: it contains the activities necessary for the transcription of negative stranded RNA, leader RNA, subgenomic mRNAs and progeny virion RNA as well as proteinases responsible for the cleavage of the polyprotein into functional products. In terms of biological role, inhibits host translation by interacting with the 40S ribosomal subunit. The nsp1-40S ribosome complex further induces an endonucleolytic cleavage near the 5'UTR of host mRNAs, targeting them for degradation. Viral mRNAs are not susceptible to nsp1-mediated endonucleolytic RNA cleavage thanks to the presence of a 5'-end leader sequence and are therefore protected from degradation. By suppressing host gene expression, nsp1 facilitates efficient viral gene expression in infected cells and evasion from host immune response. May play a role in the modulation of host cell survival signaling pathway by interacting with host PHB and PHB2. Indeed, these two proteins play a role in maintaining the functional integrity of the mitochondria and protecting cells from various stresses. Its function is as follows. Responsible for the cleavages located at the N-terminus of the replicase polyprotein. In addition, PL-PRO possesses a deubiquitinating/deISGylating activity and processes both 'Lys-48'- and 'Lys-63'-linked polyubiquitin chains from cellular substrates. Participates together with nsp4 in the assembly of virally-induced cytoplasmic double-membrane vesicles necessary for viral replication. Antagonizes innate immune induction of type I interferon by blocking the phosphorylation, dimerization and subsequent nuclear translocation of host IRF3. Also prevents host NF-kappa-B signaling. Functionally, participates in the assembly of virally-induced cytoplasmic double-membrane vesicles necessary for viral replication. In terms of biological role, cleaves the C-terminus of replicase polyprotein at 11 sites. Recognizes substrates containing the core sequence [ILMVF]-Q-|-[SGACN]. Also able to bind an ADP-ribose-1''-phosphate (ADRP). Plays a role in the initial induction of autophagosomes from host endoplasmic reticulum. Later, limits the expansion of these phagosomes that are no longer able to deliver viral components to lysosomes. Its function is as follows. Forms a hexadecamer with nsp8 (8 subunits of each) that may participate in viral replication by acting as a primase. Alternatively, may synthesize substantially longer products than oligonucleotide primers. Functionally, forms a hexadecamer with nsp7 (8 subunits of each) that may participate in viral replication by acting as a primase. Alternatively, may synthesize substantially longer products than oligonucleotide primers. In terms of biological role, forms a primer, NSP9-pU, which is utilized by the polymerase for the initiation of RNA chains. Interacts with ribosome signal recognition particle RNA (SRP). Together with NSP8, suppress protein integration into the cell membrane, thereby disrupting host immune defenses. Plays a pivotal role in viral transcription by stimulating both nsp14 3'-5' exoribonuclease and nsp16 2'-O-methyltransferase activities. Therefore plays an essential role in viral mRNAs cap methylation. Its function is as follows. RNA-directed RNA polymerase that catalyzes the transcription of viral genomic and subgenomic RNAs. Acts in complex with nsp7 and nsp8 to transcribe both the minus and positive strands of genomic RNA. The kinase-like NiRAN domain of NSP12 attaches one or more nucleotides to the amino terminus of NSP9, forming a covalent RNA-protein intermediate that serves as transcription/replication primer. Subgenomic RNAs (sgRNAs) are formed by discontinuous transcription: The polymerase has the ability to pause at transcription-regulating sequences (TRS) and jump to the leader TRS, resulting in a major deletion. This creates a series of subgenomic RNAs that are replicated, transcribed and translated. In addition, Nsp12 is a subunit of the viral RNA capping enzyme that catalyzes the RNA guanylyltransferase reaction for genomic and sub-genomic RNAs. Subsequently, the NiRAN domain transfers RNA to GDP, and forms the core cap structure GpppA-RNA. Functionally, multi-functional protein with a zinc-binding domain in N-terminus displaying RNA and DNA duplex-unwinding activities with 5' to 3' polarity. Activity of helicase is dependent on magnesium. In terms of biological role, plays a role in viral RNA synthesis through two distinct activities. The N7-guanine methyltransferase activity plays a role in the formation of the cap structure GpppA-RNA. The proofreading exoribonuclease reduces the sensitivity of the virus to RNA mutagens during replication. This activity acts on both ssRNA and dsRNA in a 3'-5' direction. Plays a role in viral transcription/replication and prevents the simultaneous activation of host cell dsRNA sensors, such as MDA5/IFIH1, OAS, and PKR. Acts by degrading the 5'-polyuridines generated during replication of the poly(A) region of viral genomic and subgenomic RNAs. Catalyzes a two-step reaction in which a 2'3'-cyclic phosphate (2'3'-cP) is first generated by 2'-O transesterification, which is then hydrolyzed to a 3'-phosphate (3'-P). If not degraded, poly(U) RNA would hybridize with poly(A) RNA tails and activate host dsRNA sensors. Its function is as follows. Methyltransferase that mediates mRNA cap 2'-O-ribose methylation to the 5'-cap structure of viral mRNAs. N7-methyl guanosine cap is a prerequisite for binding of nsp16. Therefore plays an essential role in viral mRNAs cap methylation which is essential to evade immune system. This is Replicase polyprotein 1ab (rep) from Bos taurus (Bovine).